Here is a 98-residue protein sequence, read N- to C-terminus: MALSIECQQRPEKVNPRALRREGLIPATLYGHNGAESISLVVDHKTAITMLRSVTVKETPIEVKIPHLSWEGEAVVQEIQCHPWRRNLYHLAFFAGKK.

It belongs to the bacterial ribosomal protein bL25 family. As to quaternary structure, part of the 50S ribosomal subunit; part of the 5S rRNA/L5/L18/L25 subcomplex. Contacts the 5S rRNA. Binds to the 5S rRNA independently of L5 and L18.

This is one of the proteins that binds to the 5S RNA in the ribosome where it forms part of the central protuberance. The protein is Large ribosomal subunit protein bL25 of Synechocystis sp. (strain ATCC 27184 / PCC 6803 / Kazusa).